The sequence spans 370 residues: MSVLIKTRHCFVLLGLWLVLPTASAQPLGSLVDIQGVRGNQLVGYSLVVGLDGSGDKNQVKFTGQSMANMLRQFGVQLPEKMDPKVKNVAAVAISATLPPGYGRGQSIDITVSSIGDAKSLRGGTLLLTQLRGADGEVYALAQGNVVVGGIKAEGDSGSSVTVNTPTVGRIPNGASIERQIPSDFQTNNQVVLNLKRPSFKSANNVALALNRAFGANTATAQSATNVMVNAPQDAGARVAFMSLLEDVQINAGEQSPRVVFNARTGTVVIGEGVMVRAAAVSHGNLTVNIREQKNVSQPNPLGGGKTVTTPESDIEVTKGKNQMVMVPAGTRLRSIVNTINSLGASPDDIMAILQALYEAGALDAELVVI.

Positions 1 to 25 (MSVLIKTRHCFVLLGLWLVLPTASA) are cleaved as a signal peptide.

It belongs to the FlgI family. As to quaternary structure, the basal body constitutes a major portion of the flagellar organelle and consists of four rings (L,P,S, and M) mounted on a central rod.

The protein localises to the periplasm. It is found in the bacterial flagellum basal body. Its function is as follows. Assembles around the rod to form the L-ring and probably protects the motor/basal body from shearing forces during rotation. This Yersinia pestis protein is Flagellar P-ring protein 1.